The chain runs to 318 residues: Aspartate carbamoyltransferase catalytic subunit (318 aa).

Carbamoyl phosphate is bound by residues arginine 58 and threonine 59. Lysine 86 is a binding site for L-aspartate. The carbamoyl phosphate site is built by arginine 108, histidine 141, and glutamine 144. Residues arginine 174 and arginine 226 each contribute to the L-aspartate site. Carbamoyl phosphate contacts are provided by glycine 270 and proline 271.

It belongs to the aspartate/ornithine carbamoyltransferase superfamily. ATCase family. Heterododecamer (2C3:3R2) of six catalytic PyrB chains organized as two trimers (C3), and six regulatory PyrI chains organized as three dimers (R2).

It catalyses the reaction carbamoyl phosphate + L-aspartate = N-carbamoyl-L-aspartate + phosphate + H(+). The protein operates within pyrimidine metabolism; UMP biosynthesis via de novo pathway; (S)-dihydroorotate from bicarbonate: step 2/3. Catalyzes the condensation of carbamoyl phosphate and aspartate to form carbamoyl aspartate and inorganic phosphate, the committed step in the de novo pyrimidine nucleotide biosynthesis pathway. The chain is Aspartate carbamoyltransferase catalytic subunit from Lactobacillus delbrueckii subsp. bulgaricus (strain ATCC BAA-365 / Lb-18).